Reading from the N-terminus, the 157-residue chain is DNA gyrase inhibitor (157 aa).

The protein belongs to the DNA gyrase inhibitor family. Interacts with DNA gyrase.

The protein resides in the cytoplasm. Inhibits the supercoiling activity of DNA gyrase. Acts by inhibiting DNA gyrase at an early step, prior to (or at the step of) binding of DNA by the gyrase. It protects cells against toxins that target DNA gyrase, by inhibiting activity of these toxins and reducing the formation of lethal double-strand breaks in the cell. The polypeptide is DNA gyrase inhibitor (Cronobacter turicensis (strain DSM 18703 / CCUG 55852 / LMG 23827 / z3032)).